The sequence spans 264 residues: Probable septum site-determining protein MinC (264 aa).

Residues 103-147 (SHGRRPRGGNDAKDADRNDAQDAQGAPEHAQAAEAPASTSAIPPA) form a disordered region. The segment covering 110 to 122 (GGNDAKDADRNDA) has biased composition (basic and acidic residues). A compositionally biased stretch (low complexity) spans 124 to 147 (DAQGAPEHAQAAEAPASTSAIPPA).

This sequence belongs to the MinC family. As to quaternary structure, interacts with MinD and FtsZ.

Functionally, cell division inhibitor that blocks the formation of polar Z ring septums. Rapidly oscillates between the poles of the cell to destabilize FtsZ filaments that have formed before they mature into polar Z rings. Prevents FtsZ polymerization. The protein is Probable septum site-determining protein MinC of Ralstonia pickettii (strain 12J).